Consider the following 156-residue polypeptide: Ribosome maturation factor RimP (156 aa).

The protein belongs to the RimP family.

It is found in the cytoplasm. Required for maturation of 30S ribosomal subunits. In Bacillus thuringiensis (strain Al Hakam), this protein is Ribosome maturation factor RimP.